A 309-amino-acid polypeptide reads, in one-letter code: Hydroxyacylglutathione hydrolase, mitochondrial (309 aa).

The transit peptide at 1–24 directs the protein to the mitochondrion; it reads MVLGRGSLCLRSLSALGATCARRG. Lysine 90 is subject to N6-acetyllysine. 4 residues coordinate Zn(2+): histidine 103, histidine 105, aspartate 107, and histidine 108. Lysine 117 bears the N6-acetyllysine mark. 2 residues coordinate Zn(2+): histidine 159 and aspartate 183. Substrate contacts are provided by residues 192 to 194 and 222 to 224; these read KFY and HEY. Histidine 222 serves as a coordination point for Zn(2+). Lysine 230 is modified (N6-acetyllysine; alternate). At lysine 230 the chain carries N6-succinyllysine; alternate. Position 298 to 301 (298 to 301) interacts with substrate; it reads RREK.

Belongs to the metallo-beta-lactamase superfamily. Glyoxalase II family. In terms of assembly, monomer. It depends on Zn(2+) as a cofactor.

The protein resides in the mitochondrion matrix. It localises to the cytoplasm. The enzyme catalyses an S-(2-hydroxyacyl)glutathione + H2O = a 2-hydroxy carboxylate + glutathione + H(+). It catalyses the reaction (R)-S-lactoylglutathione + H2O = (R)-lactate + glutathione + H(+). It participates in secondary metabolite metabolism; methylglyoxal degradation; (R)-lactate from methylglyoxal: step 2/2. Thiolesterase that catalyzes the hydrolysis of S-D-lactoyl-glutathione to form glutathione and D-lactic acid. The polypeptide is Hydroxyacylglutathione hydrolase, mitochondrial (Hagh) (Mus musculus (Mouse)).